A 312-amino-acid chain; its full sequence is Olfactory receptor 6C76 (312 aa).

At 1–23 (MKNRTSVTDFILLGLTDNPQLQV) the chain is on the extracellular side. Residue Asn-3 is glycosylated (N-linked (GlcNAc...) asparagine). Residues 24 to 44 (VIFSFLFLTYVLSVTGNLTII) form a helical membrane-spanning segment. Residues 45–57 (SLTLLDSHLKTPM) are Cytoplasmic-facing. A helical membrane pass occupies residues 58–80 (YFFLRNFSLEISFTSVCNPRFLI). Over 81-94 (SILTGDKSISYNAC) the chain is Extracellular. Cys-94 and Cys-176 are disulfide-bonded. The helical transmembrane segment at 95–115 (AAQLFFFIFLGSTEFFLLASM) threads the bilayer. The Cytoplasmic portion of the chain corresponds to 116 to 142 (SYDCYVAICKPLHYTTIMSDRICYQLI). A helical transmembrane segment spans residues 143–163 (ISSWLAGFLVIFPPLAMGLQL). Residues 164–195 (DFCDSNVIDHFTCDSAPLLQISCTDTSTLELM) are Extracellular-facing. The chain crosses the membrane as a helical span at residues 196–216 (SFILALFTLISTLILVILSYT). The Cytoplasmic portion of the chain corresponds to 217–238 (YIIRTILRIPSAQQRKKAFSTC). Residues 239-259 (SSHVIVVSISYGSCIFMYVKT) form a helical membrane-spanning segment. Residues 260 to 267 (SAKEGVAL) are Extracellular-facing. Residues 268–288 (TKGVAILNTSVAPMLNPFIYT) form a helical membrane-spanning segment. The Cytoplasmic segment spans residues 289 to 312 (LRNQQVKQAFKDVLRKISHKKKKH).

It belongs to the G-protein coupled receptor 1 family.

The protein localises to the cell membrane. In terms of biological role, odorant receptor. This chain is Olfactory receptor 6C76 (OR6C76), found in Homo sapiens (Human).